The chain runs to 766 residues: Hypoxia-inducible factor 1-alpha (766 aa).

The interval Met-1–Ala-26 is disordered. A compositionally biased stretch (basic and acidic residues) spans Pro-7–Ala-26. The 54-residue stretch at Arg-17–Arg-70 folds into the bHLH domain. 2 PAS domains span residues Glu-82–Lys-159 and Pro-230–Gly-300. Residues Thr-304 to Ile-347 enclose the PAC domain. Residues Asp-361–Leu-383 are disordered. Pro-426 carries the 4-hydroxyproline modification. Positions Asp-475–Ser-509 are disordered. Over residues Val-479–Val-489 the composition is skewed to polar residues. Residues Ser-490 to Ser-503 show a composition bias toward low complexity. At Pro-559 the chain carries 4-hydroxyproline. A Nuclear localization signal motif is present at residues Leu-718–Ile-721. Asn-743 carries the post-translational modification (3S)-3-hydroxyasparagine.

As to quaternary structure, efficient DNA binding requires heterodimerization of an alpha and a beta/ARNT subunit. In normoxia, is hydroxylated on Pro-426 and Pro-559. The hydroxylated prolines promote interaction with VHL, initiating rapid ubiquitination and subsequent proteasomal degradation. Under hypoxia, proline hydroxylation is impaired and ubiquitination is attenuated, resulting in stabilization. In terms of processing, in normoxia, is hydroxylated on Asn-743, thus abrogating interaction with CREBBP and EP300 and preventing transcriptional activation. Post-translationally, the iron and 2-oxoglutarate dependent 3-hydroxylation of asparagine is (S) stereospecific within HIF CTAD domains.

It localises to the cytoplasm. The protein localises to the nucleus. The protein resides in the nucleus speckle. Induced by reactive oxygen species (ROS). Its function is as follows. Functions as a master transcriptional regulator of the adaptive response to hypoxia. Under hypoxic conditions, activates the transcription of over 40 genes, including erythropoietin, glucose transporters, glycolytic enzymes, vascular endothelial growth factor, HILPDA, and other genes whose protein products increase oxygen delivery or facilitate metabolic adaptation to hypoxia. Plays an essential role in embryonic vascularization, tumor angiogenesis and pathophysiology of ischemic disease. The polypeptide is Hypoxia-inducible factor 1-alpha (hif1a) (Oncorhynchus mykiss (Rainbow trout)).